The chain runs to 80 residues: Sec-independent protein translocase protein TatA (80 aa).

Residues methionine 1–threonine 21 traverse the membrane as a helical segment. The segment at lysine 39–serine 80 is disordered. A compositionally biased stretch (basic and acidic residues) spans serine 67–serine 80.

This sequence belongs to the TatA/E family. As to quaternary structure, the Tat system comprises two distinct complexes: a TatABC complex, containing multiple copies of TatA, TatB and TatC subunits, and a separate TatA complex, containing only TatA subunits. Substrates initially bind to the TatABC complex, which probably triggers association of the separate TatA complex to form the active translocon.

The protein resides in the cell inner membrane. Part of the twin-arginine translocation (Tat) system that transports large folded proteins containing a characteristic twin-arginine motif in their signal peptide across membranes. TatA could form the protein-conducting channel of the Tat system. This is Sec-independent protein translocase protein TatA from Hahella chejuensis (strain KCTC 2396).